The sequence spans 219 residues: MLIVINYKTYNESIGNRGLEIAKIAEKVSEESGITIGVAPQFVDLRMIVENVNIPVYAQHIDNINPGSHTGHILAEAIKDCGCKGTLINHSEKRMLLADIEAVINKCKNLGLETIVCTNNINTSKAVAALSPDYIAVEPPELIGTGIPVSKANPEVVEGTVRAVKEINKDVKVLCGAGISKGEDVKAALDLGAEGVLLASGVVKAKNVEEAIRELIKFI.

N6–K8 contributes to the substrate binding site. Residue H90 is the Electrophile of the active site. The active-site Proton acceptor is E138. Residues I143, G178, and A199–S200 each bind substrate.

This sequence belongs to the triosephosphate isomerase family. As to quaternary structure, homotetramer; dimer of dimers.

It localises to the cytoplasm. The catalysed reaction is D-glyceraldehyde 3-phosphate = dihydroxyacetone phosphate. The protein operates within carbohydrate biosynthesis; gluconeogenesis. It functions in the pathway carbohydrate degradation; glycolysis; D-glyceraldehyde 3-phosphate from glycerone phosphate: step 1/1. Its function is as follows. Involved in the gluconeogenesis. Catalyzes stereospecifically the conversion of dihydroxyacetone phosphate (DHAP) to D-glyceraldehyde-3-phosphate (G3P). This Methanocaldococcus jannaschii (strain ATCC 43067 / DSM 2661 / JAL-1 / JCM 10045 / NBRC 100440) (Methanococcus jannaschii) protein is Triosephosphate isomerase.